The following is a 216-amino-acid chain: Triosephosphate isomerase (216 aa).

Residue 7-9 (NLK) coordinates substrate. H89 acts as the Electrophile in catalysis. Residue E137 is the Proton acceptor of the active site. Substrate-binding positions include I142, G175, and 196 to 197 (AS).

Belongs to the triosephosphate isomerase family. As to quaternary structure, homotetramer; dimer of dimers.

It localises to the cytoplasm. It carries out the reaction D-glyceraldehyde 3-phosphate = dihydroxyacetone phosphate. It functions in the pathway carbohydrate biosynthesis; gluconeogenesis. Its pathway is carbohydrate degradation; glycolysis; D-glyceraldehyde 3-phosphate from glycerone phosphate: step 1/1. Its function is as follows. Involved in the gluconeogenesis. Catalyzes stereospecifically the conversion of dihydroxyacetone phosphate (DHAP) to D-glyceraldehyde-3-phosphate (G3P). The sequence is that of Triosephosphate isomerase from Thermoplasma acidophilum (strain ATCC 25905 / DSM 1728 / JCM 9062 / NBRC 15155 / AMRC-C165).